A 233-amino-acid chain; its full sequence is Orotidine 5'-phosphate decarboxylase (233 aa).

Substrate is bound by residues Asp11, Lys34, 61 to 70 (DLKLHDIPNT), Thr117, Arg179, Gln188, Gly208, and Arg209. The active-site Proton donor is the Lys63.

It belongs to the OMP decarboxylase family. Type 1 subfamily. Homodimer.

It carries out the reaction orotidine 5'-phosphate + H(+) = UMP + CO2. The protein operates within pyrimidine metabolism; UMP biosynthesis via de novo pathway; UMP from orotate: step 2/2. Its function is as follows. Catalyzes the decarboxylation of orotidine 5'-monophosphate (OMP) to uridine 5'-monophosphate (UMP). This Streptococcus pneumoniae (strain CGSP14) protein is Orotidine 5'-phosphate decarboxylase.